The chain runs to 255 residues: Small ribosomal subunit protein uS2 (255 aa).

The disordered stretch occupies residues 232–255 (ASGRDIGASEEAPIEPALEDEAGA).

Belongs to the universal ribosomal protein uS2 family.

This is Small ribosomal subunit protein uS2 from Agrobacterium fabrum (strain C58 / ATCC 33970) (Agrobacterium tumefaciens (strain C58)).